The primary structure comprises 248 residues: Mannose-binding protein C (248 aa).

The signal sequence occupies residues 1-20 (MSLFPSLTLLLLSVVATSYS). The region spanning 42 to 99 (GINGFPGKDGRDGTKGEKGEPGQGLRGLQGPPGKLGPPGNPGSSGSPGPKGQKGDPGE) is the Collagen-like domain. The disordered stretch occupies residues 43-113 (INGFPGKDGR…DSSLAASERK (71 aa)). Position 47 is a 4-hydroxyproline (P47). Residues 49 to 61 (KDGRDGTKGEKGE) are compositionally biased toward basic and acidic residues. A 4-hydroxyproline mark is found at P73, P79, P82, and P88. Low complexity predominate over residues 82–91 (PGSSGSPGPK). Residues 112-130 (RKALQTEMARIKKWLTFSL) are a coiled coil. Residues 134–245 (VGNKFFLTNG…CSSSHLALCE (112 aa)) form the C-type lectin domain. Intrachain disulfides connect C155–C244 and C222–C236.

As to quaternary structure, oligomeric complex of 3 or more homotrimers. Interacts with MASP1 and MASP2. Interacts with MEP1A and MEP1B and may inhibit their catalytic activity. In terms of processing, hydroxylation on proline residues within the sequence motif, GXPG, is most likely to be 4-hydroxy as this fits the requirement for 4-hydroxylation in vertebrates.

The protein localises to the secreted. In terms of biological role, calcium-dependent lectin involved in innate immune defense. Binds mannose, fucose and N-acetylglucosamine on different microorganisms and activates the lectin complement pathway. Binds to late apoptotic cells, as well as to apoptotic blebs and to necrotic cells, but not to early apoptotic cells, facilitating their uptake by macrophages. In Chlorocebus aethiops (Green monkey), this protein is Mannose-binding protein C (MBL2).